The chain runs to 559 residues: MFQGGHQPIMVLNQNTKRESGKKAQLANISASKAVSEIVTSTLGPRSMLKMLLDPMGGIVMTNDGNAILREIDVNHPAAKSMIELARVQDEEVGDGTTSVIIMAGEMMSAAKPFIERDIHPSIIVTAYYRALEESIKKIEELAVPIDVNNDDQVNKALSSCIGTKFTSRWGKLITDLALKAVRTIMRGGNLQKLNLEIKRYAKVEKIPGGTLEDSVVLDGVMFNKDITHPKMRRFIKNPRVILLDCPLEYKKGESMTNLEMMKETDMTDALQQEMEELALMCNDILKHKPDVVITEKGVSDLAQHYLLKQNVSVIRRVRKTDNNRISRVSGATIVNRPEEIQESDVGKKCGLFEVKLIGDEYFTFMTECENPEACSIILRGASKDVLNEMERNLHDCLAVAKNIFVNPKLVPGGGAIEMEVSSHLEKISSSIEGLHQLPFRAVAYALEAIPKTLAQNCGVDVVRNITELRAKHNQEGNKFIGIEGNSGKITDMGEANVWEPIAVKLQVYKTAIESACMLLRIDDVVSGLKKQKVAKGGASVTDGNGQEIPETFGDARDG.

C369 and C375 form a disulfide bridge. The segment at 537–559 (GGASVTDGNGQEIPETFGDARDG) is disordered.

Belongs to the TCP-1 chaperonin family. As to quaternary structure, heterooligomeric complex of about 850 to 900 kDa that forms two stacked rings, 12 to 16 nm in diameter.

The protein localises to the cytoplasm. Its function is as follows. Molecular chaperone; assists the folding of proteins upon ATP hydrolysis. Known to play a role, in vitro, in the folding of actin and tubulin. This Tetrahymena pyriformis protein is T-complex protein 1 subunit gamma.